A 187-amino-acid chain; its full sequence is Oligoribonuclease (187 aa).

The Exonuclease domain maps to 7 to 170 (LCWLDMEMTG…DDILESIEEM (164 aa)). Residue Tyr128 is part of the active site.

Belongs to the oligoribonuclease family.

The protein localises to the cytoplasm. Functionally, 3'-to-5' exoribonuclease specific for small oligoribonucleotides. This Neisseria meningitidis serogroup C / serotype 2a (strain ATCC 700532 / DSM 15464 / FAM18) protein is Oligoribonuclease.